The sequence spans 159 residues: Insulin-like peptide 7 (159 aa).

The N-terminal stretch at 1–31 (MTRMIIQNSGSWTLCGAVLLFVLPLIPTPEA) is a signal peptide. 3 cysteine pairs are disulfide-bonded: C63–C136, C75–C150, and C135–C141. Residues 90-121 (TGNDEAWIKKTTTEPDGSTWLHVNYANMFLRS) constitute a propeptide, connecting peptide.

This sequence belongs to the insulin family. In terms of assembly, heterodimer of a B chain and an A chain linked by two disulfide bonds. As to expression, broadly expressed at a low level throughout the embryo, except the yolk. Expressed at a moderate level in the embryonic midgut. Larval expression is restricted to ten cells of the ventral nerve cord - in four pairs of centrally located cells in the most posterior abdominal segments and in one pair of dorsally located cells in the A1 or A2 segments.

The protein localises to the secreted. Possible ligand of InR/insulin-like receptor. This chain is Insulin-like peptide 7, found in Drosophila melanogaster (Fruit fly).